Reading from the N-terminus, the 88-residue chain is NADH-ubiquinone oxidoreductase chain 4L (88 aa).

The next 2 helical transmembrane spans lie at 22 to 42 (IILMIISIEIMLLAVTLLVLV) and 57 to 77 (IYIIAIAGAESAIGLGILVAY).

It belongs to the complex I subunit 4L family.

It is found in the mitochondrion membrane. The catalysed reaction is a ubiquinone + NADH + 5 H(+)(in) = a ubiquinol + NAD(+) + 4 H(+)(out). Functionally, core subunit of the mitochondrial membrane respiratory chain NADH dehydrogenase (Complex I) that is believed to belong to the minimal assembly required for catalysis. Complex I functions in the transfer of electrons from NADH to the respiratory chain. The immediate electron acceptor for the enzyme is believed to be ubiquinone. This is NADH-ubiquinone oxidoreductase chain 4L (ND4L) from Trimorphomyces papilionaceus (Jelly fungus).